The chain runs to 306 residues: tRNA pseudouridine synthase B (306 aa).

Aspartate 51 (nucleophile) is an active-site residue.

This sequence belongs to the pseudouridine synthase TruB family. Type 1 subfamily.

It carries out the reaction uridine(55) in tRNA = pseudouridine(55) in tRNA. Responsible for synthesis of pseudouridine from uracil-55 in the psi GC loop of transfer RNAs. The sequence is that of tRNA pseudouridine synthase B from Nocardia farcinica (strain IFM 10152).